The primary structure comprises 49 residues: MLELLKSLVFAVIMVPVVMAIILGLIYGLGEVFNIFSGVGKKDQPGQNH.

Topologically, residues Met1–Ser7 are periplasmic. A helical membrane pass occupies residues Leu8 to Gly28. The Cytoplasmic segment spans residues Leu29–His49.

Belongs to the AcrZ family. As to quaternary structure, part of the AcrA-AcrB-AcrZ-TolC efflux pump, interacts directly with AcrB.

The protein localises to the cell inner membrane. Functionally, acrA-AcrB-AcrZ-TolC is a drug efflux protein complex with a broad substrate specificity. This protein binds to AcrB and is required for efflux of some but not all substrates, suggesting it may influence the specificity of drug export. The sequence is that of Multidrug efflux pump accessory protein AcrZ from Escherichia coli O157:H7.